Consider the following 1106-residue polypeptide: Voltage-dependent calcium channel subunit alpha-2/delta-1 (1106 aa).

Residues 1-26 form the signal peptide; that stretch reads MAAGRPLAWTLTLWQAWLILIGPSSE. Over 27–1076 the chain is Extracellular; the sequence is EPFPSAVTIK…VLEDYTDCGG (1050 aa). N94 is a glycosylation site (N-linked (GlcNAc...) asparagine). S121 is subject to Phosphoserine. N-linked (GlcNAc...) asparagine glycans are attached at residues N138 and N186. Positions 255-432 constitute a VWFA domain; the sequence is DMLILVDVSG…INTQEYLDVL (178 aa). Positions 261, 263, and 265 each coordinate a divalent metal cation. Residues 261 to 265 carry the MIDAS-like motif motif; it reads DVSGS. N-linked (GlcNAc...) asparagine glycans are attached at residues N326 and N350. C406 and C1062 are disulfide-bonded. In terms of domain architecture, Cache spans 448–539; it reads WTNVYLDALE…QPKPIGVGIP (92 aa). N-linked (GlcNAc...) asparagine glycosylation is found at N615, N784, and N891. A helical membrane pass occupies residues 1077–1097; that stretch reads VSGLNPSLWSIIGIQFVLLWL. Residues 1098–1106 lie on the Cytoplasmic side of the membrane; it reads VSGSRHCLL.

This sequence belongs to the calcium channel subunit alpha-2/delta family. Dimer formed of alpha-2-1 and delta-1 chains; disulfide-linked. Voltage-dependent calcium channels are multisubunit complexes, consisting of alpha-1 (CACNA1), alpha-2 (CACNA2D), beta (CACNB) and delta (CACNA2D) subunits in a 1:1:1:1 ratio. Proteolytically processed into subunits alpha-2-1 and delta-1 that are disulfide-linked. As to expression, skeletal muscle.

It is found in the membrane. The protein resides in the cell membrane. Its function is as follows. The alpha-2/delta subunit of voltage-dependent calcium channels regulates calcium current density and activation/inactivation kinetics of the calcium channel. Plays an important role in excitation-contraction coupling. The chain is Voltage-dependent calcium channel subunit alpha-2/delta-1 (CACNA2D1) from Oryctolagus cuniculus (Rabbit).